The following is a 95-amino-acid chain: Large ribosomal subunit protein bL28 (95 aa).

The tract at residues 1–28 is disordered; the sequence is MARKRTLGGKAPQAGNKVSHSQRKTRRQ.

It belongs to the bacterial ribosomal protein bL28 family.

The polypeptide is Large ribosomal subunit protein bL28 (Magnetococcus marinus (strain ATCC BAA-1437 / JCM 17883 / MC-1)).